The chain runs to 504 residues: Cytochrome P450 4A25 (504 aa).

Transmembrane regions (helical) follow at residues 6 to 26 (LASA…LLLL) and 110 to 130 (APVL…LLNG). A heme-binding site is contributed by Cys-451.

Belongs to the cytochrome P450 family. The cofactor is heme.

The protein resides in the endoplasmic reticulum membrane. The enzyme catalyses an omega-methyl-long-chain fatty acid + reduced [NADPH--hemoprotein reductase] + O2 = an omega-hydroxy-long-chain fatty acid + oxidized [NADPH--hemoprotein reductase] + H2O + H(+). In terms of biological role, catalyzes the omega- and (omega-1)-hydroxylation of various fatty acids such as laurate and palmitate. Has no activity toward taurochenodeoxycholic acid. This is Cytochrome P450 4A25 (CYP4A25) from Sus scrofa (Pig).